A 292-amino-acid polypeptide reads, in one-letter code: Xyloglucan endotransglucosylase/hydrolase protein A (292 aa).

The signal sequence occupies residues 1–20; sequence MGSSLWTCLILLSLASASFA. Residues 21 to 219 form the GH16 domain; sequence ANPRTPIDVP…WSKAPFIASY (199 aa). The active-site Nucleophile is E105. The Proton donor role is filled by E109. E109 serves as a coordination point for xyloglucan. The N-linked (GlcNAc...) asparagine glycan is linked to N113. Xyloglucan contacts are provided by residues 122–124, 132–134, 198–199, and G203; these read QTN, DRE, and DW. Intrachain disulfides connect C227–C236 and C273–C286. A xyloglucan-binding site is contributed by R278.

This sequence belongs to the glycosyl hydrolase 16 family. XTH group 1 subfamily. Post-translationally, contains at least one intrachain disulfide bond essential for its enzymatic activity. Predominantly expressed in the phloem fibers of growing internodes. Expressed in xylem cells in the basal part of the internode. In the internode, it is expressed closer to the top of the internode compared to XTHB.

It localises to the secreted. It is found in the cell wall. Its subcellular location is the extracellular space. The protein resides in the apoplast. It carries out the reaction breaks a beta-(1-&gt;4) bond in the backbone of a xyloglucan and transfers the xyloglucanyl segment on to O-4 of the non-reducing terminal glucose residue of an acceptor, which can be a xyloglucan or an oligosaccharide of xyloglucan.. Functionally, catalyzes xyloglucan endohydrolysis (XEH) and/or endotransglycosylation (XET). Cleaves and religates xyloglucan polymers, an essential constituent of the primary cell wall, and thereby participates in cell wall construction of growing tissues. The protein is Xyloglucan endotransglucosylase/hydrolase protein A (XTHA) of Phaseolus angularis (Azuki bean).